Reading from the N-terminus, the 107-residue chain is Nucleoid-associated protein Atu0095 (107 aa).

Residues 81-107 (KGEAQAQEKMADLTAGLPLPPGMKLPF) are disordered. Over residues 98-107 (PLPPGMKLPF) the composition is skewed to pro residues.

It belongs to the YbaB/EbfC family. Homodimer.

The protein localises to the cytoplasm. Its subcellular location is the nucleoid. In terms of biological role, binds to DNA and alters its conformation. May be involved in regulation of gene expression, nucleoid organization and DNA protection. The polypeptide is Nucleoid-associated protein Atu0095 (Agrobacterium fabrum (strain C58 / ATCC 33970) (Agrobacterium tumefaciens (strain C58))).